A 622-amino-acid chain; its full sequence is Polyprotein p69 (622 aa).

The 248-residue stretch at 1–248 (MSCLRKPSQS…AARDPLARIG (248 aa)) folds into the Peptidase C7 domain. Residues cysteine 162 and histidine 215 each act as for papain-like protease p29 activity in the active site.

Autocatalytically processed.

In terms of biological role, P40 protein is involved in reduction of conidiation of the host. Not necessary for replication. Also involved in reduction of orange pigmentation of the host. Functionally, cysteine protease of the peptidase family C7 that contributes to hypovirulence-associated traits like the reduction in conidiation and laccase activity, but not to virulence attenuation. Acts as a suppressor of RNA-mediated gene silencing, also known as post-transcriptional gene silencing (PTGS), a mechanism of viral defense that limits the accumulation of viral RNAs. Enhances viral dsRNA accumulation and virus transmission. Also involved in the reduction in orange pigmentation of the host, an effect independent of the intrinsic protease activity. This Cryphonectria hypovirus 1 (strain Euro7) (CHV-1/Euro7) protein is Polyprotein p69.